The chain runs to 542 residues: ATP synthase subunit beta (542 aa).

The segment covering 1–50 has biased composition (low complexity); that stretch reads MAKTPAKAPAAAAKPAAVKKPAAPKAAAAPKAAAVATPAAKKPAAPKAAP. The disordered stretch occupies residues 1–61; it reads MAKTPAKAPA…SKVAGTREKP (61 aa). 216–223 is an ATP binding site; sequence GGAGVGKT.

The protein belongs to the ATPase alpha/beta chains family. In terms of assembly, F-type ATPases have 2 components, CF(1) - the catalytic core - and CF(0) - the membrane proton channel. CF(1) has five subunits: alpha(3), beta(3), gamma(1), delta(1), epsilon(1). CF(0) has three main subunits: a(1), b(2) and c(9-12). The alpha and beta chains form an alternating ring which encloses part of the gamma chain. CF(1) is attached to CF(0) by a central stalk formed by the gamma and epsilon chains, while a peripheral stalk is formed by the delta and b chains.

Its subcellular location is the cell inner membrane. It carries out the reaction ATP + H2O + 4 H(+)(in) = ADP + phosphate + 5 H(+)(out). Functionally, produces ATP from ADP in the presence of a proton gradient across the membrane. The catalytic sites are hosted primarily by the beta subunits. This chain is ATP synthase subunit beta, found in Caulobacter sp. (strain K31).